We begin with the raw amino-acid sequence, 128 residues long: Large ribosomal subunit protein uL22 (128 aa).

This sequence belongs to the universal ribosomal protein uL22 family. In terms of assembly, part of the 50S ribosomal subunit.

Functionally, this protein binds specifically to 23S rRNA; its binding is stimulated by other ribosomal proteins, e.g. L4, L17, and L20. It is important during the early stages of 50S assembly. It makes multiple contacts with different domains of the 23S rRNA in the assembled 50S subunit and ribosome. In terms of biological role, the globular domain of the protein is located near the polypeptide exit tunnel on the outside of the subunit, while an extended beta-hairpin is found that lines the wall of the exit tunnel in the center of the 70S ribosome. The chain is Large ribosomal subunit protein uL22 from Rhodopseudomonas palustris (strain BisA53).